Reading from the N-terminus, the 298-residue chain is Transcription factor SRM1 (298 aa).

Residues 7–62 (SDGSVWSREDDIAFERALANNTDESEERWEKIAADVPGKSVEQIKEHYELLVEDVT) enclose the SANT domain. Positions 68-118 (CVPLPAYGSPEGSNGHAGDEGASSKKGGNSHAGESNQAGKSKSDQERRKGI) are disordered. The segment covering 108-118 (SKSDQERRKGI) has biased composition (basic and acidic residues). Residues 111–168 (DQERRKGIAWTEDEHRLFLLGLDKYGKGDWRSISRNFVVTRTPTQVASHAQKYFIRLN) form the HTH myb-type domain. Positions 140–164 (WRSISRNFVVTRTPTQVASHAQKYF) form a DNA-binding region, H-T-H motif. Positions 182–200 (ITSVGNADVSTPQGPITGQ) are enriched in polar residues. The interval 182-245 (ITSVGNADVS…GPPMYGTPAI (64 aa)) is disordered. Low complexity predominate over residues 201 to 215 (NNSNNNNNNNNNNSS).

Expressed in young seedlings, developing leaves, sepals and trichomes.

Its subcellular location is the nucleus. Functionally, transcription activator that coordinates abscisic acid (ABA) biosynthesis and signaling-related genes via binding to the specific promoter motif 5'-(A/T)AACCAT-3'. Represses ABA-mediated salt (e.g. NaCl and KCl) stress tolerance. Regulates leaf shape and promotes vegetative growth. The protein is Transcription factor SRM1 of Arabidopsis thaliana (Mouse-ear cress).